Consider the following 146-residue polypeptide: Anti-sigma F factor (146 aa).

Belongs to the anti-sigma-factor family.

The catalysed reaction is L-seryl-[protein] + ATP = O-phospho-L-seryl-[protein] + ADP + H(+). It catalyses the reaction L-threonyl-[protein] + ATP = O-phospho-L-threonyl-[protein] + ADP + H(+). In terms of biological role, binds to sigma F and blocks its ability to form an RNA polymerase holoenzyme (E-sigma F). Phosphorylates SpoIIAA on a serine residue. This phosphorylation may enable SpoIIAA to act as an anti-anti-sigma factor that counteracts SpoIIAB and thus releases sigma F from inhibition. The protein is Anti-sigma F factor of Shouchella clausii (strain KSM-K16) (Alkalihalobacillus clausii).